A 147-amino-acid polypeptide reads, in one-letter code: uncharacterized protein (147 aa).

The HTH marR-type domain occupies 1–137 (MRDNTIGSLI…LYELMTKVHK (137 aa)). Positions 53–76 (QMELAEKVTVTQGGISRMLTRLEK) form a DNA-binding region, H-T-H motif.

This is an uncharacterized protein from Bacillus anthracis.